The following is a 448-amino-acid chain: Na(+)-malate symporter (448 aa).

11 helical membrane passes run 31-51, 60-80, 86-106, 123-143, 153-173, 182-202, 214-234, 276-293, 297-319, 333-353, and 359-379; these read IGVI…LAAY, LGGF…GQRI, IGGP…YNVL, FLYF…NRIV, VPLV…GFIF, FFVV…PLSI, VFVS…IICA, LMGA…FGGL, FIFI…ANIL, FISS…FIPL, and VISI…IGSG.

Belongs to the 2-hydroxycarboxylate transporter (2-HCT) (TC 2.A.24) family.

The protein localises to the cell membrane. Its function is as follows. Acts as a Na(+)-malate symporter, as it catalyzes malate-dependent uptake of Na(+) and Na(+)-dependent uptake of malate. The protein is Na(+)-malate symporter of Bacillus subtilis (strain 168).